The primary structure comprises 519 residues: Ribonuclease Y (519 aa).

Residues 3–23 (LLSLLLILLGIILGVVVGYIV) traverse the membrane as a helical segment. The KH domain occupies 209–269 (TVSVVNLPND…IRREIARTAL (61 aa)). In terms of domain architecture, HD spans 335–428 (VLKHSIEVAH…VAAADALSAA (94 aa)).

The protein belongs to the RNase Y family.

The protein localises to the cell membrane. Its function is as follows. Endoribonuclease that initiates mRNA decay. The sequence is that of Ribonuclease Y from Staphylococcus epidermidis (strain ATCC 35984 / DSM 28319 / BCRC 17069 / CCUG 31568 / BM 3577 / RP62A).